The sequence spans 282 residues: Acetyl-coenzyme A carboxylase carboxyl transferase subunit beta (282 aa).

One can recognise a CoA carboxyltransferase N-terminal domain in the interval 29–282; that stretch reads LMKRCPNCGL…LLKYGGMQDD (254 aa). Zn(2+) contacts are provided by Cys-33, Cys-36, Cys-51, and Cys-54. Residues 33–54 form a C4-type zinc finger; sequence CPNCGLEFFARRLDKYKTCPDC.

Belongs to the AccD/PCCB family. In terms of assembly, acetyl-CoA carboxylase is a heterohexamer composed of biotin carboxyl carrier protein (AccB), biotin carboxylase (AccC) and two subunits each of ACCase subunit alpha (AccA) and ACCase subunit beta (AccD). Requires Zn(2+) as cofactor.

Its subcellular location is the cytoplasm. The enzyme catalyses N(6)-carboxybiotinyl-L-lysyl-[protein] + acetyl-CoA = N(6)-biotinyl-L-lysyl-[protein] + malonyl-CoA. It participates in lipid metabolism; malonyl-CoA biosynthesis; malonyl-CoA from acetyl-CoA: step 1/1. Functionally, component of the acetyl coenzyme A carboxylase (ACC) complex. Biotin carboxylase (BC) catalyzes the carboxylation of biotin on its carrier protein (BCCP) and then the CO(2) group is transferred by the transcarboxylase to acetyl-CoA to form malonyl-CoA. The chain is Acetyl-coenzyme A carboxylase carboxyl transferase subunit beta from Lactobacillus delbrueckii subsp. bulgaricus (strain ATCC 11842 / DSM 20081 / BCRC 10696 / JCM 1002 / NBRC 13953 / NCIMB 11778 / NCTC 12712 / WDCM 00102 / Lb 14).